A 285-amino-acid chain; its full sequence is MFDKTRLPYVALDVLCVLLAGLPFAILTSRHTPFQRGLFCNDESIKYPYKEDTIPYPLLGGIIIPFSIIVMIVGETLSVYFNLLHSNSFIRNNYIATIYKAIGTFLFGAAASQSLTDIAKYSIGRLRPHFLDVCDPDWSKINCSDGYIENYICRGNAQKVKEGRLSFYSGHSSFSMYCMLFVALYLQARMKGDWARLLRPTLQFGLVAVSIYVGLSRVSDYKHHWSDVLTGLIQGALVAIVVAVYVSDFFKERNSPFKERKEEDSHTTLHETPTTGNHYRNSHQP.

The Cytoplasmic segment spans residues 1–6; it reads MFDKTR. The PDZ-binding; involved in localization to the apical cell membrane motif lies at 5–7; that stretch reads TRL. The chain crosses the membrane as a helical span at residues 7–27; that stretch reads LPYVALDVLCVLLAGLPFAIL. Residues 28-53 lie on the Extracellular side of the membrane; that stretch reads TSRHTPFQRGLFCNDESIKYPYKEDT. The helical transmembrane segment at 54-74 threads the bilayer; the sequence is IPYPLLGGIIIPFSIIVMIVG. At 75-94 the chain is on the cytoplasmic side; it reads ETLSVYFNLLHSNSFIRNNY. The chain crosses the membrane as a helical span at residues 95–115; the sequence is IATIYKAIGTFLFGAAASQSL. The Extracellular portion of the chain corresponds to 116–164; it reads TDIAKYSIGRLRPHFLDVCDPDWSKINCSDGYIENYICRGNAQKVKEGR. Positions 120 to 128 are phosphatase sequence motif I; the sequence is KYSIGRLRP. A glycan (N-linked (GlcNAc...) asparagine) is linked at asparagine 142. The helical transmembrane segment at 165 to 185 threads the bilayer; it reads LSFYSGHSSFSMYCMLFVALY. The segment at 168 to 171 is phosphatase sequence motif II; the sequence is YSGH. Histidine 171 (proton donors) is an active-site residue. The Cytoplasmic portion of the chain corresponds to 186 to 196; the sequence is LQARMKGDWAR. The helical transmembrane segment at 197 to 216 threads the bilayer; sequence LLRPTLQFGLVAVSIYVGLS. The phosphatase sequence motif III stretch occupies residues 216–227; sequence SRVSDYKHHWSD. At 217–229 the chain is on the extracellular side; sequence RVSDYKHHWSDVL. Catalysis depends on histidine 223, which acts as the Nucleophile. Residues 230 to 250 form a helical membrane-spanning segment; that stretch reads TGLIQGALVAIVVAVYVSDFF. At 251–285 the chain is on the cytoplasmic side; that stretch reads KERNSPFKERKEEDSHTTLHETPTTGNHYRNSHQP. The segment covering 257-269 has biased composition (basic and acidic residues); it reads FKERKEEDSHTTL. Positions 257–285 are disordered; it reads FKERKEEDSHTTLHETPTTGNHYRNSHQP. Residues 270 to 285 are compositionally biased toward polar residues; the sequence is HETPTTGNHYRNSHQP.

It belongs to the PA-phosphatase related phosphoesterase family. In terms of assembly, forms functional homodimers and homooligomers that are not required for substrate recognition and catalytic activity. Can also form heterooligomers with PLPP2 and PLPP3. Post-translationally, N-glycosylated. N-linked sugars are of the complex type. N-glycosylation is not required for the phosphatase activity.

It is found in the cell membrane. The protein resides in the apical cell membrane. The protein localises to the membrane raft. Its subcellular location is the membrane. It localises to the caveola. It catalyses the reaction a 1,2-diacyl-sn-glycero-3-phosphate + H2O = a 1,2-diacyl-sn-glycerol + phosphate. It carries out the reaction 1,2-dihexadecanoyl-sn-glycero-3-phosphate + H2O = 1,2-dihexadecanoyl-sn-glycerol + phosphate. The catalysed reaction is 1,2-di-(9Z-octadecenoyl)-sn-glycero-3-phosphate + H2O = 1,2-di-(9Z-octadecenoyl)-sn-glycerol + phosphate. The enzyme catalyses a monoacyl-sn-glycero-3-phosphate + H2O = a monoacylglycerol + phosphate. It catalyses the reaction (9Z)-octadecenoyl-sn-glycero-3-phosphate + H2O = (9Z-octadecenoyl)-glycerol + phosphate. It carries out the reaction a 1-acyl-sn-glycero-3-phosphate + H2O = a 1-acyl-sn-glycerol + phosphate. The catalysed reaction is 1-(9Z-octadecenoyl)-sn-glycero-3-phosphate + H2O = 1-(9Z-octadecenoyl)-sn-glycerol + phosphate. The enzyme catalyses a 1,2-diacyl-sn-glycerol 3-diphosphate + H2O = a 1,2-diacyl-sn-glycero-3-phosphate + phosphate + H(+). It catalyses the reaction sphing-4-enine 1-phosphate + H2O = sphing-4-enine + phosphate. It carries out the reaction an N-acylsphing-4-enine 1-phosphate + H2O = an N-acylsphing-4-enine + phosphate. The catalysed reaction is N-(octanoyl)-sphing-4-enine-1-phosphate + H2O = N-octanoylsphing-4-enine + phosphate. The enzyme catalyses N-(9Z-octadecenoyl)-ethanolamine phosphate + H2O = N-(9Z-octadecenoyl) ethanolamine + phosphate. It catalyses the reaction 1-hexadecanoyl-2-(9Z-octadecenoyl)-sn-glycero-3-phosphate + H2O = 1-hexadecanoyl-2-(9Z-octadecenoyl)-sn-glycerol + phosphate. It functions in the pathway lipid metabolism; phospholipid metabolism. Magnesium-independent phospholipid phosphatase. Insensitive to N-ethylmaleimide. Its function is as follows. Magnesium-independent phospholipid phosphatase of the plasma membrane that catalyzes the dephosphorylation of a variety of glycerolipid and sphingolipid phosphate esters including phosphatidate/PA, lysophosphatidate/LPA, diacylglycerol pyrophosphate/DGPP, sphingosine 1-phosphate/S1P and ceramide 1-phosphate/C1P. Also acts on N-oleoyl ethanolamine phosphate/N-(9Z-octadecenoyl)-ethanolamine phosphate, a potential physiological compound. Through its extracellular phosphatase activity allows both the hydrolysis and the cellular uptake of these bioactive lipid mediators from the milieu, regulating signal transduction in different cellular processes. It is for instance essential for the extracellular hydrolysis of S1P and subsequent conversion into intracellular S1P. Involved in the regulation of inflammation, platelets activation, cell proliferation and migration among other processes. May also have an intracellular activity to regulate phospholipid-mediated signaling pathways. This is Phospholipid phosphatase 1 from Sus scrofa (Pig).